An 871-amino-acid chain; its full sequence is Metabotropic glutamate receptor 6 (871 aa).

A signal peptide spans 1–23; sequence MGRLRVLLLWLAWWLSQAGIAHG. At 24 to 579 the chain is on the extracellular side; sequence AGSVRLAGGL…VVRLTWSSPW (556 aa). A disulfide bond links Cys-51 and Cys-93. L-glutamate contacts are provided by residues Ser-148, 169–171, and Tyr-219; that span reads AST. Disulfide bonds link Cys-238–Cys-530, Cys-361–Cys-377, Cys-417–Cys-424, Cys-512–Cys-531, Cys-516–Cys-534, Cys-537–Cys-549, and Cys-552–Cys-565. N-linked (GlcNAc...) asparagine glycosylation occurs at Asn-290. L-glutamate is bound at residue Asp-301. Lys-394 serves as a coordination point for L-glutamate. Residues Asn-445 and Asn-473 are each glycosylated (N-linked (GlcNAc...) asparagine). Asn-561 carries an N-linked (GlcNAc...) asparagine glycan. Residues 580-602 form a helical membrane-spanning segment; that stretch reads AALPLLLAVLGIMATTTIIATFM. Residues 603–616 lie on the Cytoplasmic side of the membrane; sequence RHNDTPIVRASGRE. A helical membrane pass occupies residues 617–637; it reads LSYVLLTGIFLIYAITFLMVA. At 638–648 the chain is on the extracellular side; that stretch reads EPCAAVCASRR. The helical transmembrane segment at 649-667 threads the bilayer; it reads LLLGLGTTLSYSALLTKTN. Over 668–691 the chain is Cytoplasmic; the sequence is RIYRIFEQGKRSVTPPPFISPTSQ. The chain crosses the membrane as a helical span at residues 692–712; it reads LVITFGLTSLQVVGVIAWLGA. Residues 713 to 742 lie on the Extracellular side of the membrane; it reads QPPHSVIDYEEQRTVDPEQARGVLKCDMSD. A helical transmembrane segment spans residues 743–764; that stretch reads LSLIGCLGYSLLLMVTCTVYAI. Topologically, residues 765 to 777 are cytoplasmic; sequence KARGVPETFNEAK. A helical membrane pass occupies residues 778-800; it reads PIGFTMYTTCIIWLAFVPIFFGT. The Extracellular segment spans residues 801 to 813; sequence AQSAEKIYIQTTT. The chain crosses the membrane as a helical span at residues 814-839; that stretch reads LTVSLSLSASVSLGMLYVPKTYVILF. At 840 to 871 the chain is on the cytoplasmic side; the sequence is HPEQNVQKRKRSLKKTSTMAAPPKSENSEDAK. Residues 848–871 are disordered; sequence RKRSLKKTSTMAAPPKSENSEDAK.

The protein belongs to the G-protein coupled receptor 3 family. In terms of assembly, homodimer. Interacts with GPR179. Interacts with photoreceptor synaptic protein LRIT1 (via its N-terminal extracellular domain). In terms of tissue distribution, detected in the outer plexiform layer in retina (at protein level).

Its subcellular location is the cell membrane. It localises to the endoplasmic reticulum membrane. The protein localises to the golgi apparatus membrane. The protein resides in the cell projection. It is found in the dendrite. In terms of biological role, G-protein coupled receptor for glutamate. Ligand binding causes a conformation change that triggers signaling via guanine nucleotide-binding proteins (G proteins) and modulates the activity of down-stream effectors, such as adenylate cyclase. Signaling inhibits adenylate cyclase activity. Signaling stimulates TRPM1 channel activity and Ca(2+) uptake. Required for normal vision. This chain is Metabotropic glutamate receptor 6 (Grm6), found in Mus musculus (Mouse).